A 97-amino-acid chain; its full sequence is Protein RESPONSE TO LOW SULFUR 3 (97 aa).

Residues 8 to 42 (VTVAAEEVEELRRRNGELEREMEEMKKEMVQLWRR) are a coiled coil.

This chain is Protein RESPONSE TO LOW SULFUR 3, found in Arabidopsis thaliana (Mouse-ear cress).